The chain runs to 94 residues: Protein LURE 1.1 (94 aa).

Positions 1 to 19 are cleaved as a signal peptide; sequence MKLIFIFLTLLIFVSSCTS. 3 cysteine pairs are disulfide-bonded: C58/C75, C61/C82, and C65/C84. The PRK6 binding stretch occupies residues 67-87; sequence RRDRYIRTCSFERKLCRCSYS.

It belongs to the DEFL family. As to quaternary structure, binds to PRK6 LRRs. Expressed in the pistil. Detected exclusively in the synergid cells.

Its subcellular location is the secreted. Its function is as follows. Pollen tube attractants guiding pollen tubes to the ovular micropyle. The protein is Protein LURE 1.1 of Arabidopsis thaliana (Mouse-ear cress).